Here is a 458-residue protein sequence, read N- to C-terminus: Phosphoglucosamine mutase (458 aa).

Ser-108 acts as the Phosphoserine intermediate in catalysis. Residues Ser-108, Asp-247, Asp-249, and Asp-251 each contribute to the Mg(2+) site. Phosphoserine is present on Ser-108.

The protein belongs to the phosphohexose mutase family. The cofactor is Mg(2+). In terms of processing, activated by phosphorylation.

It carries out the reaction alpha-D-glucosamine 1-phosphate = D-glucosamine 6-phosphate. Functionally, catalyzes the conversion of glucosamine-6-phosphate to glucosamine-1-phosphate. The polypeptide is Phosphoglucosamine mutase (Thiobacillus denitrificans (strain ATCC 25259 / T1)).